Consider the following 348-residue polypeptide: Short-chain dehydrogenase fogG (348 aa).

NADP(+)-binding residues include leucine 51, arginine 75, aspartate 100, and asparagine 126. Active-site proton donor residues include serine 180 and tyrosine 215. Positions 215 and 219 each coordinate NADP(+). Catalysis depends on lysine 219, which acts as the Lowers pKa of active site Tyr.

It belongs to the short-chain dehydrogenases/reductases (SDR) family.

Its pathway is secondary metabolite biosynthesis. In terms of biological role, short-chain dehydrogenase; part of the gene cluster that mediates the biosynthesis of flavoglaucin and congeners (including aspergin, dihydroauroglaucin and auroglaucin), prenylated salicylaldehyde derivatives carrying a saturated or an unsaturated C-7 side chain. The PKS fogA releases the carboxylic acid (8E,10E,12E)-3,5,7-trihydroxytetradeca-8,10,12-trienoic acid as its product, as well as derivatives with one and two double bonds. FogA is indeed able to reduce the initial triketide, thus being at least partially responsible for the differently saturated heptyl side chains of flavoglaucin congeners. The oxidoreductases fogB, fogC and fogD modify the nascent polyketide in fogA-bound form and, together, fogA, fogB, fogC and fogD are necessary for the formation of the aromatic core and the cyclized PKS products are released as salicyl alcohols. In particular, fogB is responsible for oxidation of a hydroxyl group or reduction of remaining double bond(s) at the C-7 residue whereas fogD is probably involved in the reductive release of the modified PKS products. The cytochrome P450 monooxygenase fogE is then responsible for the hydroxylation at C-3 of the benzene ring. The fogE products are substrates of the prenyltransferase fogH and the prenylated benzyl alcohols are subsequently oxidized by the fogF to produce the final aryl aldehydes flavoglaucin and congeners. The short-chain dehydrogenase fogG does not seem to be involved in the biosynthesis of the prenylated salicylaldehyde derivatives. This chain is Short-chain dehydrogenase fogG, found in Aspergillus ruber (strain CBS 135680).